The following is a 410-amino-acid chain: S-adenosylmethionine synthase (410 aa).

Histidine 15 provides a ligand contact to ATP. Aspartate 17 serves as a coordination point for Mg(2+). K(+) is bound at residue glutamate 43. The L-methionine site is built by glutamate 56 and glutamine 100. The interval 100–110 is flexible loop; sequence QSPDIAKGVDT. ATP contacts are provided by residues 171–173, 248–249, aspartate 257, 263–264, alanine 280, and lysine 284; these read DGK, KF, and RK. Aspartate 257 is a binding site for L-methionine. Lysine 288 is an L-methionine binding site.

The protein belongs to the AdoMet synthase family. In terms of assembly, homotetramer; dimer of dimers. It depends on Mg(2+) as a cofactor. K(+) is required as a cofactor.

It is found in the cytoplasm. It catalyses the reaction L-methionine + ATP + H2O = S-adenosyl-L-methionine + phosphate + diphosphate. The protein operates within amino-acid biosynthesis; S-adenosyl-L-methionine biosynthesis; S-adenosyl-L-methionine from L-methionine: step 1/1. Catalyzes the formation of S-adenosylmethionine (AdoMet) from methionine and ATP. The overall synthetic reaction is composed of two sequential steps, AdoMet formation and the subsequent tripolyphosphate hydrolysis which occurs prior to release of AdoMet from the enzyme. This Prochlorococcus marinus (strain MIT 9211) protein is S-adenosylmethionine synthase.